The sequence spans 79 residues: Conotoxin Vi6.9 (79 aa).

An N-terminal signal peptide occupies residues 1-22 (MKLTCMVIITVLFLTASQLITA). Positions 23 to 47 (DYSRDQRQYRAVRLGDEMRNFKGAR) are excised as a propeptide. 3 cysteine pairs are disulfide-bonded: Cys-49–Cys-62, Cys-56–Cys-67, and Cys-61–Cys-77. A 4-hydroxyproline mark is found at Pro-60 and Pro-63.

Belongs to the conotoxin O1 superfamily. As to expression, expressed by the venom duct.

Its subcellular location is the secreted. Its function is as follows. Ion channel inhibitor that inhibits the increase in intracellular calcium upon depolarization in DRG neurons. In vivo, both intraperitoneal and intracranial injections into mice induce hyperactivity. This is Conotoxin Vi6.9 from Conus virgo (Virgin cone).